Reading from the N-terminus, the 89-residue chain is MALTSEQKKEILSSYGLHATDTGSPEAQIALLTKRIADLTEHLKVHKHDHHSRRGLLLLVGRRRRLIKYLSLIDVQRYRSLIERLGLRR.

Belongs to the universal ribosomal protein uS15 family. Part of the 30S ribosomal subunit. Forms a bridge to the 50S subunit in the 70S ribosome, contacting the 23S rRNA.

In terms of biological role, one of the primary rRNA binding proteins, it binds directly to 16S rRNA where it helps nucleate assembly of the platform of the 30S subunit by binding and bridging several RNA helices of the 16S rRNA. Forms an intersubunit bridge (bridge B4) with the 23S rRNA of the 50S subunit in the ribosome. This is Small ribosomal subunit protein uS15 from Mycobacterium leprae (strain Br4923).